A 349-amino-acid chain; its full sequence is E3 ubiquitin-protein ligase rnf146 (349 aa).

The tract at residues 1 to 21 (MASCGEVDHSVSSLPSSKKGS) is disordered. Positions 10 to 21 (SVSSLPSSKKGS) are enriched in low complexity. An RING-type zinc finger spans residues 41–79 (CAICLQSCVHPVQLPCRHVFCFLCVKGASWQSKRCALCR). Residues 97-173 (ELKTGGRGAT…EHGRRRKIKR (77 aa)) enclose the WWE domain. A glycoprotein is bound by residues Tyr113, Arg116, Trp120, Tyr150, Gln159, Arg169, and Lys181. Disordered stretches follow at residues 226-251 (TTVL…SPSL) and 264-349 (DAPE…CTEV). The segment covering 283 to 292 (SMSSSPNTYA) has biased composition (polar residues). A compositionally biased stretch (acidic residues) spans 298 to 307 (WSDDEGDGEA). The segment covering 308 to 317 (VEPREQRLRL) has biased composition (basic and acidic residues).

The protein localises to the cytoplasm. It localises to the cytosol. Its subcellular location is the nucleus. The enzyme catalyses S-ubiquitinyl-[E2 ubiquitin-conjugating enzyme]-L-cysteine + [acceptor protein]-L-lysine = [E2 ubiquitin-conjugating enzyme]-L-cysteine + N(6)-ubiquitinyl-[acceptor protein]-L-lysine.. It functions in the pathway protein modification; protein ubiquitination. In terms of biological role, E3 ubiquitin-protein ligase that specifically binds poly-ADP-ribosylated proteins and mediates their ubiquitination and subsequent degradation. May regulate many important biological processes, such as cell survival and DNA damage response. Acts as an activator of the Wnt signaling pathway by mediating the ubiquitination of poly-ADP-ribosylated proteins. Neuroprotective protein. Protects against cell death induced by DNA damaging agents and rescues cells from G1 arrest. Promotes cell survival after gamma-irradiation. Facilitates DNA repair. The protein is E3 ubiquitin-protein ligase rnf146 (rnf146) of Salmo salar (Atlantic salmon).